Consider the following 620-residue polypeptide: 1-deoxy-D-xylulose-5-phosphate synthase (620 aa).

Residues histidine 80 and 121 to 123 (GHS) contribute to the thiamine diphosphate site. A Mg(2+)-binding site is contributed by aspartate 152. Thiamine diphosphate contacts are provided by residues 153-154 (GA), asparagine 181, tyrosine 288, and glutamate 370. Residue asparagine 181 participates in Mg(2+) binding.

This sequence belongs to the transketolase family. DXPS subfamily. In terms of assembly, homodimer. It depends on Mg(2+) as a cofactor. Thiamine diphosphate is required as a cofactor.

The enzyme catalyses D-glyceraldehyde 3-phosphate + pyruvate + H(+) = 1-deoxy-D-xylulose 5-phosphate + CO2. Its pathway is metabolic intermediate biosynthesis; 1-deoxy-D-xylulose 5-phosphate biosynthesis; 1-deoxy-D-xylulose 5-phosphate from D-glyceraldehyde 3-phosphate and pyruvate: step 1/1. Its function is as follows. Catalyzes the acyloin condensation reaction between C atoms 2 and 3 of pyruvate and glyceraldehyde 3-phosphate to yield 1-deoxy-D-xylulose-5-phosphate (DXP). In Shigella dysenteriae serotype 1 (strain Sd197), this protein is 1-deoxy-D-xylulose-5-phosphate synthase.